The sequence spans 478 residues: ATP synthase subunit beta (478 aa).

An ATP-binding site is contributed by 164 to 171 (GGAGVGKT).

The protein belongs to the ATPase alpha/beta chains family. In terms of assembly, F-type ATPases have 2 components, CF(1) - the catalytic core - and CF(0) - the membrane proton channel. CF(1) has five subunits: alpha(3), beta(3), gamma(1), delta(1), epsilon(1). CF(0) has three main subunits: a(1), b(2) and c(9-12). The alpha and beta chains form an alternating ring which encloses part of the gamma chain. CF(1) is attached to CF(0) by a central stalk formed by the gamma and epsilon chains, while a peripheral stalk is formed by the delta and b chains.

The protein localises to the cell membrane. It carries out the reaction ATP + H2O + 4 H(+)(in) = ADP + phosphate + 5 H(+)(out). In terms of biological role, produces ATP from ADP in the presence of a proton gradient across the membrane. The catalytic sites are hosted primarily by the beta subunits. This is ATP synthase subunit beta from Corynebacterium kroppenstedtii (strain DSM 44385 / JCM 11950 / CIP 105744 / CCUG 35717).